We begin with the raw amino-acid sequence, 194 residues long: Segregation and condensation protein B (194 aa).

Belongs to the ScpB family. As to quaternary structure, homodimer. Homodimerization may be required to stabilize the binding of ScpA to the Smc head domains. Component of a cohesin-like complex composed of ScpA, ScpB and the Smc homodimer, in which ScpA and ScpB bind to the head domain of Smc. The presence of the three proteins is required for the association of the complex with DNA.

It localises to the cytoplasm. In terms of biological role, participates in chromosomal partition during cell division. May act via the formation of a condensin-like complex containing Smc and ScpA that pull DNA away from mid-cell into both cell halves. The sequence is that of Segregation and condensation protein B from Streptococcus agalactiae serotype Ia (strain ATCC 27591 / A909 / CDC SS700).